The chain runs to 101 residues: Urease subunit beta (101 aa).

It belongs to the urease beta subunit family. Heterotrimer of UreA (gamma), UreB (beta) and UreC (alpha) subunits. Three heterotrimers associate to form the active enzyme.

The protein resides in the cytoplasm. The catalysed reaction is urea + 2 H2O + H(+) = hydrogencarbonate + 2 NH4(+). The protein operates within nitrogen metabolism; urea degradation; CO(2) and NH(3) from urea (urease route): step 1/1. This chain is Urease subunit beta, found in Rhizobium leguminosarum bv. trifolii (strain WSM2304).